Reading from the N-terminus, the 382-residue chain is MGDWSALGKLLDKVQAYSTAGGKVWLSVLFIFRILLLGTAVESAWGDEQSAFRCNTQQPGCENVCYDKSFPISHVRFWVLQIIFVSVPTLLYLAHVFYVMRKEEKLNKKEEELKVAQTDGVNVEMHLKQIEIKKFKYGIEEHGKVKMRGGLLRTYIISILFKSIFEVAFLLIQWYIYGFSLSAVYTCKRDPCPHQVDCFLSRPTEKTIFIIFMLVVSLVSLALNIIELFYVFFKGVKDRVKGKSDPYHTTSGALSPTKDCGSQKYAYFNGCSSPTAPLSPMSPPGYKLVTGDRNNSSCRNYNKQASEQNWANYSAEQNRMGQAGSTISNSHAQPFDFPDDNQNSKKLAAGHELQPLAIVDQRPSSRASSRASSRPRPDDLEI.

Residues 2–23 (GDWSALGKLLDKVQAYSTAGGK) lie on the Cytoplasmic side of the membrane. Phosphoserine is present on Ser-5. The chain crosses the membrane as a helical span at residues 24-44 (VWLSVLFIFRILLLGTAVESA). Topologically, residues 45-76 (WGDEQSAFRCNTQQPGCENVCYDKSFPISHVR) are extracellular. Disulfide bonds link Cys-54–Cys-192 and Cys-187–Cys-198. Residues 77 to 97 (FWVLQIIFVSVPTLLYLAHVF) traverse the membrane as a helical segment. At 98 to 155 (YVMRKEEKLNKKEEELKVAQTDGVNVEMHLKQIEIKKFKYGIEEHGKVKMRGGLLRTY) the chain is on the cytoplasmic side. A Glycyl lysine isopeptide (Lys-Gly) (interchain with G-Cter in SUMO) cross-link involves residue Lys-144. The helical transmembrane segment at 156–176 (IISILFKSIFEVAFLLIQWYI) threads the bilayer. The Extracellular portion of the chain corresponds to 177-207 (YGFSLSAVYTCKRDPCPHQVDCFLSRPTEKT). A helical membrane pass occupies residues 208 to 228 (IFIIFMLVVSLVSLALNIIEL). Over 229–382 (FYVFFKGVKD…SRPRPDDLEI (154 aa)) the chain is Cytoplasmic. Residue Lys-237 forms a Glycyl lysine isopeptide (Lys-Gly) (interchain with G-Cter in SUMO) linkage. The segment at 244–382 (SDPYHTTSGA…SRPRPDDLEI (139 aa)) is interaction with NOV. Position 247 is a phosphotyrosine (Tyr-247). 2 positions are modified to phosphoserine: Ser-255 and Ser-262. The segment at 264-382 (KYAYFNGCSS…SRPRPDDLEI (119 aa)) is interaction with UBQLN4. An S-nitrosocysteine modification is found at Cys-271. Thr-275 is subject to Phosphothreonine. 2 positions are modified to phosphoserine: Ser-306 and Ser-314. A compositionally biased stretch (polar residues) spans 317–332 (QNRMGQAGSTISNSHA). A disordered region spans residues 317 to 382 (QNRMGQAGST…SRPRPDDLEI (66 aa)). Ser-325 carries the phosphoserine; by CK1 modification. Residue Thr-326 is modified to Phosphothreonine. Phosphoserine; by CK1 is present on residues Ser-328 and Ser-330. A phosphoserine mark is found at Ser-344 and Ser-365. A compositionally biased stretch (low complexity) spans 362–374 (RPSSRASSRASSR). Phosphoserine; by PKC/PRKCG and PKC/PRKCD is present on Ser-368. Phosphoserine occurs at positions 369 and 373.

Belongs to the connexin family. Alpha-type (group II) subfamily. In terms of assembly, a connexon is composed of a hexamer of connexins. Interacts with SGSM3. Interacts with RIC1/CIP150. Interacts with CNST and CSNK1D. Interacts (via C-terminus) with TJP1. Interacts (via C-terminus) with SRC (via SH3 domain). Interacts (not ubiquitinated) with UBQLN4 (via UBA domain). Interacts with NOV. Interacts with TMEM65. Interacts with ANK3/ANKG and PKP2. Post-translationally, phosphorylation at Ser-325, Ser-328 and Ser-330 by CK1 modulates gap junction assembly. Phosphorylated at Ser-368 by PRKCG; phosphorylation induces disassembly of gap junction plaques and inhibition of gap junction activity. Phosphorylation at Ser-368 by PRKCD triggers its internalization into small vesicles leading to proteasome-mediated degradation. Sumoylated with SUMO1, SUMO2 and SUMO3, which may regulate the level of functional Cx43 gap junctions at the plasma membrane. May be desumoylated by SENP1 or SENP2. In terms of processing, S-nitrosylation at Cys-271 is enriched at the muscle endothelial gap junction in arteries, it augments channel permeability and may regulate of smooth muscle cell to endothelial cell communication. Post-translationally, acetylated in the developing cortex; leading to delocalization from the cell membrane.

It localises to the cell membrane. The protein localises to the cell junction. Its subcellular location is the gap junction. It is found in the endoplasmic reticulum. Its function is as follows. Gap junction protein that acts as a regulator of bladder capacity. A gap junction consists of a cluster of closely packed pairs of transmembrane channels, the connexons, through which materials of low MW diffuse from one cell to a neighboring cell. May play a critical role in the physiology of hearing by participating in the recycling of potassium to the cochlear endolymph. Negative regulator of bladder functional capacity: acts by enhancing intercellular electrical and chemical transmission, thus sensitizing bladder muscles to cholinergic neural stimuli and causing them to contract. May play a role in cell growth inhibition through the regulation of NOV expression and localization. Plays an essential role in gap junction communication in the ventricles. This Chlorocebus aethiops (Green monkey) protein is Gap junction alpha-1 protein (GJA1).